A 486-amino-acid chain; its full sequence is Zinc finger CCCH domain-containing protein 49 (486 aa).

Residues 157 to 184 (RNRAHVCSFYVRGECTRGAECPYRHEMP) form a C3H1-type zinc finger. Residues 228 to 301 (RTLYIGGLDS…VRLKLMWGKP (74 aa)) enclose the RRM domain. Disordered stretches follow at residues 329 to 348 (SQQQSGDQPQPPGMEGQQQP) and 379 to 486 (LVES…NGMT). Low complexity-rich tracts occupy residues 389-407 (PGPQQAGQGQASSSSGQSY) and 415-430 (YHGGQYPPYYPPYGGY). The span at 431 to 444 (MPPPRMPYQQPPQY) shows a compositional bias: pro residues. Positions 445 to 486 (PAYQPMLAPPAQSQASSLQQPAPATQQLGQGPQQQTTQNGMT) are enriched in low complexity.

The sequence is that of Zinc finger CCCH domain-containing protein 49 from Oryza sativa subsp. japonica (Rice).